Here is a 129-residue protein sequence, read N- to C-terminus: uncharacterized protein (129 aa).

2 helical membrane-spanning segments follow: residues 4 to 24 (FKFL…ILII) and 37 to 57 (VISL…DLSI).

The protein to B.burgdorferi BBF20.

Its subcellular location is the cell membrane. This is an uncharacterized protein from Borreliella burgdorferi (strain ATCC 35210 / DSM 4680 / CIP 102532 / B31) (Borrelia burgdorferi).